The sequence spans 403 residues: 8-amino-7-oxononanoate synthase (403 aa).

Residue arginine 30 participates in substrate binding. 121–122 (GY) contributes to the pyridoxal 5'-phosphate binding site. Histidine 146 contributes to the substrate binding site. Pyridoxal 5'-phosphate-binding residues include serine 192, histidine 220, and threonine 248. Lysine 251 carries the post-translational modification N6-(pyridoxal phosphate)lysine. Substrate is bound at residue threonine 367.

The protein belongs to the class-II pyridoxal-phosphate-dependent aminotransferase family. BioF subfamily. As to quaternary structure, homodimer. Pyridoxal 5'-phosphate is required as a cofactor.

It catalyses the reaction 6-carboxyhexanoyl-[ACP] + L-alanine + H(+) = (8S)-8-amino-7-oxononanoate + holo-[ACP] + CO2. It functions in the pathway cofactor biosynthesis; biotin biosynthesis. Catalyzes the decarboxylative condensation of pimeloyl-[acyl-carrier protein] and L-alanine to produce 8-amino-7-oxononanoate (AON), [acyl-carrier protein], and carbon dioxide. This is 8-amino-7-oxononanoate synthase from Burkholderia vietnamiensis (strain G4 / LMG 22486) (Burkholderia cepacia (strain R1808)).